Reading from the N-terminus, the 199-residue chain is Dephospho-CoA kinase (199 aa).

The DPCK domain occupies 11-199; that stretch reads RIGLTGGIAS…DLHDQLDALL (189 aa). Residue 19 to 24 participates in ATP binding; that stretch reads ASGKSS.

Belongs to the CoaE family.

It localises to the cytoplasm. The enzyme catalyses 3'-dephospho-CoA + ATP = ADP + CoA + H(+). Its pathway is cofactor biosynthesis; coenzyme A biosynthesis; CoA from (R)-pantothenate: step 5/5. Functionally, catalyzes the phosphorylation of the 3'-hydroxyl group of dephosphocoenzyme A to form coenzyme A. In Synechococcus sp. (strain CC9902), this protein is Dephospho-CoA kinase.